The sequence spans 432 residues: MNKPVLDIQDRPTVGQWITLSLQHLFAMFGATILVPYLVGLDPSIALLTSGLGTLAFLLITKWQVPAYLGSSFAYIAPIIAAKTAGGPGAAMIGSFLAGLVYGVVALIIKKAGYRWVMKLLPPVVVGPVIIVIGLGLAGTAVGMAMNGPDGKYSLLHFSVALVTLAATIVCSVLARGMLSLIPVLVGIVVGYLYALAVGLVDLSKVAAAKWFEWPDFLIPFADYPVRVTWEIVMLMVPVAIVTLSEHIGHQLVLSKVVGRDLIQKPGLHRSILGDGTATMISALLGGPPKTTYGENIGVLAITRVYSVYVLAGAAVIAIAFGFVGKITALISSIPTPVMGGVSILLFGIIASSGLRMLIDSRVDFGQTRNLVIASVILVIGIGGAVLKISDSFQITGMALSAIVGVLLNLILPGRPQAAENLFEENQSDHVA.

12 consecutive transmembrane segments (helical) span residues 25-45, 65-85, 89-109, 124-144, 155-175, 181-201, 206-226, 228-248, 305-325, 330-350, 370-390, and 393-413; these read LFAMFGATILVPYLVGLDPSI, VPAYLGSSFAYIAPIIAAKTA, GAAMIGSFLAGLVYGVVALII, VVVGPVIIVIGLGLAGTAVGM, LLHFSVALVTLAATIVCSVLA, LIPVLVGIVVGYLYALAVGLV, VAAAKWFEWPDFLIPFADYPV, VTWEIVMLMVPVAIVTLSEHI, VYSVYVLAGAAVIAIAFGFVG, LISSIPTPVMGGVSILLFGII, NLVIASVILVIGIGGAVLKIS, and FQITGMALSAIVGVLLNLILP.

This sequence belongs to the nucleobase:cation symporter-2 (NCS2) (TC 2.A.40) family.

It localises to the cell membrane. Functionally, transport of uracil in the cell. The protein is Uracil permease (pyrP) of Bacillus caldolyticus.